The chain runs to 194 residues: Ion-translocating oxidoreductase complex subunit A (194 aa).

6 helical membrane passes run 4–24 (LALI…QFLG), 39–59 (IGLS…SYIL), 71–91 (FLRT…TEML), 102–122 (VLGI…VALL), 135–155 (TTQG…FAAL), and 172–192 (AIGM…SGLI).

This sequence belongs to the NqrDE/RnfAE family. As to quaternary structure, the complex is composed of six subunits: RnfA, RnfB, RnfC, RnfD, RnfE and RnfG.

The protein resides in the cell inner membrane. In terms of biological role, part of a membrane-bound complex that couples electron transfer with translocation of ions across the membrane. In Pseudomonas paraeruginosa (strain DSM 24068 / PA7) (Pseudomonas aeruginosa (strain PA7)), this protein is Ion-translocating oxidoreductase complex subunit A.